A 176-amino-acid polypeptide reads, in one-letter code: UPF0262 protein GbCGDNIH1_1393 (176 aa).

Belongs to the UPF0262 family.

The protein is UPF0262 protein GbCGDNIH1_1393 of Granulibacter bethesdensis (strain ATCC BAA-1260 / CGDNIH1).